A 241-amino-acid chain; its full sequence is UDP-2,3-diacylglucosamine hydrolase (241 aa).

5 residues coordinate Mn(2+): aspartate 8, histidine 10, aspartate 41, asparagine 78, and histidine 113. 78–79 (NR) provides a ligand contact to substrate. Substrate contacts are provided by aspartate 121, serine 159, asparagine 163, lysine 166, and histidine 194. Residues histidine 194 and histidine 196 each contribute to the Mn(2+) site.

Belongs to the LpxH family. The cofactor is Mn(2+).

The protein resides in the cell inner membrane. The catalysed reaction is UDP-2-N,3-O-bis[(3R)-3-hydroxytetradecanoyl]-alpha-D-glucosamine + H2O = 2-N,3-O-bis[(3R)-3-hydroxytetradecanoyl]-alpha-D-glucosaminyl 1-phosphate + UMP + 2 H(+). It participates in glycolipid biosynthesis; lipid IV(A) biosynthesis; lipid IV(A) from (3R)-3-hydroxytetradecanoyl-[acyl-carrier-protein] and UDP-N-acetyl-alpha-D-glucosamine: step 4/6. In terms of biological role, hydrolyzes the pyrophosphate bond of UDP-2,3-diacylglucosamine to yield 2,3-diacylglucosamine 1-phosphate (lipid X) and UMP by catalyzing the attack of water at the alpha-P atom. Involved in the biosynthesis of lipid A, a phosphorylated glycolipid that anchors the lipopolysaccharide to the outer membrane of the cell. This chain is UDP-2,3-diacylglucosamine hydrolase, found in Shewanella putrefaciens (strain CN-32 / ATCC BAA-453).